A 206-amino-acid polypeptide reads, in one-letter code: Dephospho-CoA kinase (206 aa).

In terms of domain architecture, DPCK spans 4–200 (TVALTGGIGS…ASYLKLASQF (197 aa)). 12-17 (GSGKST) contributes to the ATP binding site.

The protein belongs to the CoaE family.

The protein resides in the cytoplasm. It carries out the reaction 3'-dephospho-CoA + ATP = ADP + CoA + H(+). The protein operates within cofactor biosynthesis; coenzyme A biosynthesis; CoA from (R)-pantothenate: step 5/5. In terms of biological role, catalyzes the phosphorylation of the 3'-hydroxyl group of dephosphocoenzyme A to form coenzyme A. This is Dephospho-CoA kinase from Salmonella paratyphi A (strain ATCC 9150 / SARB42).